Reading from the N-terminus, the 22-residue chain is Unknown endosperm protein L (22 aa).

A compositionally biased stretch (basic and acidic residues) spans 1 to 11; the sequence is MRHSNKIRDEE. Positions 1-22 are disordered; sequence MRHSNKIRDEEMVNNTRLNXXA. A compositionally biased stretch (polar residues) spans 13–22; the sequence is VNNTRLNXXA.

Post-translationally, the N-terminus is blocked.

The protein is Unknown endosperm protein L of Hordeum vulgare (Barley).